The primary structure comprises 143 residues: MFMGEYSHTLDVKGRLIIPAKFRNQLGEKFIVTRWMEHALRAMPMPVWEKLEQQLNQLPLGKKEARQFKRFVMAGAMEAEIDKQGRIIIPSNLKTYAGLAKNVIVTGSGDSFEIWSDENWQSYTAETAENFDDIAEGLVDFDF.

2 SpoVT-AbrB domains span residues 5–47 (EYSH…PMPV) and 76–119 (AMEA…SDEN).

Belongs to the MraZ family. As to quaternary structure, forms oligomers.

It is found in the cytoplasm. Its subcellular location is the nucleoid. This is Transcriptional regulator MraZ from Leuconostoc citreum (strain KM20).